A 262-amino-acid polypeptide reads, in one-letter code: Protein FLOURY 2 (262 aa).

The first 21 residues, 1–21 (MATKILALLALLALLVSATNA), serve as a signal peptide directing secretion.

This sequence belongs to the zein family.

The protein resides in the endoplasmic reticulum membrane. Zeins are major seed storage proteins. This is Protein FLOURY 2 from Zea mays (Maize).